The sequence spans 859 residues: ATP-dependent RNA helicase DDX24 (859 aa).

Lys-17 carries the post-translational modification N6-acetyllysine. Ser-60 carries the phosphoserine modification. Residues Pro-61 to Ala-170 form a disordered region. N6-acetyllysine is present on Lys-71. 2 positions are modified to phosphoserine: Ser-82 and Ser-94. Residues Ser-94–Lys-105 show a composition bias toward basic residues. Polar residues predominate over residues Asn-106–Gln-115. Over residues Leu-125–Ala-139 the composition is skewed to acidic residues. The Q motif signature appears at Ser-192–Ala-220. Residues Ala-224–Lys-528 enclose the Helicase ATP-binding domain. Ala-237–Thr-244 contacts ATP. The segment at Asn-262–Asp-300 is disordered. Over residues Thr-277–Ala-293 the composition is skewed to basic and acidic residues. Phosphoserine occurs at positions 287 and 295. Position 302 is a phosphothreonine (Thr-302). A disordered region spans residues Ser-326–Lys-376. Residue Lys-370 forms a Glycyl lysine isopeptide (Lys-Gly) (interchain with G-Cter in SUMO2) linkage. Residues Asp-471 to Asp-474 carry the DEAD box motif. The Helicase C-terminal domain occupies Tyr-578 to Asp-723. Residues Lys-624, Lys-808, and Lys-825 each participate in a glycyl lysine isopeptide (Lys-Gly) (interchain with G-Cter in SUMO2) cross-link. Polar residues-rich tracts occupy residues Pro-799–Gly-814 and Pro-823–Leu-833. A disordered region spans residues Pro-799 to Asn-859.

This sequence belongs to the DEAD box helicase family. DDX24/MAK5 subfamily. In terms of assembly, interacts with FADD. Interacts with RIPK1; this interaction disrupts RLR signaling activation of IFN-dependent transcription factor IRF7. Interacts with NIP7. Interacts with EP300; this interaction prevents TP53 acetylation mediated by EP300. (Microbial infection) Interacts with HIV-1 virus Gag and Rev proteins. Ubiquitinated by MDM2 without targeting DDX24 for proteasomal degradation. Instead, polyubiquitinated DDX24 promotes interaction with NIP7, a component of pre-rRNP processing complex, and associates with pre-rRNA molecules and pre-ribosomal particles. In terms of tissue distribution, ubiquitous. Most abundant in heart and brain, but with lowest levels in thymus and small intestine.

It is found in the cytoplasm. It localises to the nucleus. The enzyme catalyses ATP + H2O = ADP + phosphate + H(+). Its function is as follows. ATP-dependent RNA helicase that plays a role in various aspects of RNA metabolism including pre-mRNA splicing and is thereby involved in different biological processes such as cell cycle regulation or innate immunity. Plays an inhibitory role in TP53 transcriptional activity and subsequently in TP53 controlled cell growth arrest and senescence by inhibiting its EP300 mediated acetylation. Negatively regulates cytosolic RNA-mediated innate immune signaling at least in part by affecting RIPK1/IRF7 interactions. Alternatively, possesses antiviral activity by recognizing gammaherpesvirus transcripts in the context of lytic reactivation. Plays an essential role in cell cycle regulation in vascular smooth muscle cells by interacting with and regulating FANCA (Fanconi anemia complementation group A) mRNA. In terms of biological role, (Microbial infection) Plays a positive role in HIV-1 infection by promoting Rev-dependent nuclear export of viral RNAs and their packaging into virus particles. This Homo sapiens (Human) protein is ATP-dependent RNA helicase DDX24 (DDX24).